Consider the following 188-residue polypeptide: Ribosome-recycling factor (188 aa).

Belongs to the RRF family.

It localises to the cytoplasm. Responsible for the release of ribosomes from messenger RNA at the termination of protein biosynthesis. May increase the efficiency of translation by recycling ribosomes from one round of translation to another. The chain is Ribosome-recycling factor from Phenylobacterium zucineum (strain HLK1).